The following is a 763-amino-acid chain: Xaa-Pro dipeptidyl-peptidase (763 aa).

Catalysis depends on charge relay system residues Ser348, Asp468, and His498.

The protein belongs to the peptidase S15 family. In terms of assembly, homodimer.

The protein localises to the cytoplasm. The enzyme catalyses Hydrolyzes Xaa-Pro-|- bonds to release unblocked, N-terminal dipeptides from substrates including Ala-Pro-|-p-nitroanilide and (sequentially) Tyr-Pro-|-Phe-Pro-|-Gly-Pro-|-Ile.. Removes N-terminal dipeptides sequentially from polypeptides having unsubstituted N-termini provided that the penultimate residue is proline. The polypeptide is Xaa-Pro dipeptidyl-peptidase (pepX) (Lactococcus lactis subsp. cremoris (Streptococcus cremoris)).